Consider the following 736-residue polypeptide: Exo-oligoalginate lyase (736 aa).

An N-terminal signal peptide occupies residues 1-23; it reads MLSVNTIKNTLLAAVLVSVPATA. Substrate is bound by residues Lys136, 146 to 149, Lys198, His202, and 257 to 260; these read QSLN and YYQR. Tyr258 functions as the Proton donor in the catalytic mechanism. His413 (proton acceptor) is an active-site residue. Zn(2+) is bound by residues His415 and Asp433. Arg438 provides a ligand contact to substrate. His464 contacts Zn(2+). Residue Glu667 participates in substrate binding.

This sequence belongs to the polysaccharide lyase 17 family. As to quaternary structure, homodimer. Zn(2+) serves as cofactor.

It localises to the periplasm. The enzyme catalyses Cleavage of 4-deoxy-alpha-L-erythro-hex-4-enopyranuronoside oligosaccharides into 4-deoxy-alpha-L-erythro-hex-4-enopyranuronate monosaccharides.. Its function is as follows. Catalyzes the depolymerization of alginate through an exolytic mode of action, via a beta-elimination mechanism. Preferentially acts on oligoalginates with degrees of polymerization higher than 2 to produce the alginate monomer, 4-deoxy-L-erythro-5-hexoseulose uronic acid. In Saccharophagus degradans (strain 2-40 / ATCC 43961 / DSM 17024), this protein is Exo-oligoalginate lyase.